A 486-amino-acid polypeptide reads, in one-letter code: Sensor protein PhoQ (486 aa).

Residues 1-16 (MKKLLRLFFPLSLRVR) are Cytoplasmic-facing. A helical transmembrane segment spans residues 17 to 37 (FLLATAAVVLVLSLAYGMVAL). Over 38–194 (IGYSVSFDKT…LKSSYMVWSW (157 aa)) the chain is Periplasmic. 2 residues coordinate a divalent metal cation: Asp-151 and Asp-152. Residues 195 to 215 (FIYVLSANLLLVIPLLWVAAW) form a helical membrane-spanning segment. The region spanning 215–266 (WWSLRPIEALAKEVRELEEHNRELLNPATTRELTSLVRNLNRLLKSERERYD) is the HAMP domain. The Cytoplasmic portion of the chain corresponds to 216 to 486 (WSLRPIEALA…GRQHSAPKDE (271 aa)). The region spanning 274-480 (DLTHSLKTPL…RMEVIFGRQH (207 aa)) is the Histidine kinase domain. His-277 bears the Phosphohistidine; by autocatalysis mark. Asn-385 serves as a coordination point for Mg(2+). ATP contacts are provided by residues 385–393 (NVLDNACKY), 415–420 (DDGPGI), and 434–446 (RVDTLRPGQGVGL). Gln-442 contributes to the Mg(2+) binding site.

As to quaternary structure, homodimer; probably dimerizes via the cytoplasmic domain. Probably interacts with MgrB in the periplasm, altering its activity and that of downstream effector PhoP.

It localises to the cell inner membrane. The enzyme catalyses ATP + protein L-histidine = ADP + protein N-phospho-L-histidine.. With respect to regulation, acetyl-CoA acts as a non-competitive inhibitor of the PhoQ autokinase activity. Feedback inhibited by MgrB, which seems to bind PhoQ, altering its activity and that of downstream effector PhoP. Its function is as follows. Member of the two-component regulatory system PhoP/PhoQ involved in adaptation to low Mg(2+) environments and the control of acid resistance genes. In low periplasmic Mg(2+), PhoQ functions as a membrane-associated protein kinase that undergoes autophosphorylation and subsequently transfers the phosphate to PhoP, resulting in the expression of PhoP-activated genes (PAG) and repression of PhoP-repressed genes (PRG). In high periplasmic Mg(2+), acts as a protein phosphatase that dephosphorylates phospho-PhoP, resulting in the repression of PAG and may lead to expression of some PRG. PhoP-regulated transcription is redox-sensitive, being activated when the periplasm becomes more reducing (deletion of dsbA/dsbB, or treatment with dithiothreitol). MgrB acts between DsbA/DsbB and PhoP/PhoQ in this pathway; the 2 periplasmic Cys residues of MgrB are required for its action on PhoQ, which then acts on PhoP. Mediates magnesium influx to the cytosol by activation of mgtA. Promotes expression of the two-component regulatory system rstA/rstB and transcription of the hemL, mgrB, nagA, slyB, vboR and yrbL genes. This chain is Sensor protein PhoQ (phoQ), found in Escherichia coli (strain K12).